A 288-amino-acid chain; its full sequence is MQAKAFAKINLGLFITGKRPDGYHNLETIFAPINWYDTITFEAADTISMSCTNLDLPVDENNLCIKAARALQQAAGVQHGIAMTLEKKVPFGAGLGGGSSDAATVLRVLNHLWQLNLPHATLHNIAVKLGADVPYFLFSKGIAYAGGIGDELEDLQTSLPFAILTVFPNEHIATVWAYKNFYRRFELQRPNLNTLVKNLCTTGNTSALPSFENDFEAAVFDHFPTVRDVKTMLMENGALYASLSGSGSALFGLFANEAEAYAAIESLPATYRTNITPARFVMDDGTGL.

Residue Lys8 is part of the active site. 90–100 (PFGAGLGGGSS) is a binding site for ATP. The active site involves Asp132.

The protein belongs to the GHMP kinase family. IspE subfamily.

It catalyses the reaction 4-CDP-2-C-methyl-D-erythritol + ATP = 4-CDP-2-C-methyl-D-erythritol 2-phosphate + ADP + H(+). The protein operates within isoprenoid biosynthesis; isopentenyl diphosphate biosynthesis via DXP pathway; isopentenyl diphosphate from 1-deoxy-D-xylulose 5-phosphate: step 3/6. Its function is as follows. Catalyzes the phosphorylation of the position 2 hydroxy group of 4-diphosphocytidyl-2C-methyl-D-erythritol. The sequence is that of 4-diphosphocytidyl-2-C-methyl-D-erythritol kinase from Chlorobium chlorochromatii (strain CaD3).